The following is a 1009-amino-acid chain: Type VII secretion system accessory factor EsaA (1009 aa).

Transmembrane regions (helical) follow at residues 7-27, 822-842, 869-889, 903-923, 928-948, and 979-999; these read IYAL…IFFV, ISPT…AYIF, AITS…VGLI, KFIL…TYLL, SIGM…MNNL, and IGLA…LNMF.

It belongs to the EsaA family. In terms of assembly, homodimer. Interacts with EssB.

It is found in the cell membrane. Functionally, component of the type VII secretion system (Ess). Provides together with EssB and other components such as EssC and EssE a secretion platform across the cytoplasmic membrane in the host. This is Type VII secretion system accessory factor EsaA from Staphylococcus aureus (strain MRSA252).